A 141-amino-acid polypeptide reads, in one-letter code: Protein E6 (141 aa).

2 zinc fingers span residues 27–64 (CRFCNSFLTYIELREFDYKNLQLIWTQEDFVFACCSSC) and 101–137 (CQYCLKCLDLIEKLDICCSHQAFHKVRGNWKGRCRHC).

It belongs to the papillomaviridae E6 protein family. Forms homodimers. Interacts with ubiquitin-protein ligase UBE3A/E6-AP; this interaction stimulates UBE3A ubiquitin activity. Interacts with host BAK1.

The protein localises to the host cytoplasm. It is found in the host nucleus. Its function is as follows. Plays a major role in the induction and maintenance of cellular transformation. E6 associates with host UBE3A/E6-AP ubiquitin-protein ligase and modulates its activity. Protects host keratinocytes from apoptosis by mediating the degradation of host BAK1. May also inhibit host immune response. The sequence is that of Protein E6 from Homo sapiens (Human).